We begin with the raw amino-acid sequence, 587 residues long: Potassium-transporting ATPase potassium-binding subunit (587 aa).

A run of 4 helical transmembrane segments spans residues 1–21, 60–80, 89–109, and 131–151; these read MSTSVAGVLAVALLVAALWVT, PVYARSVLAFSLVSVLLLYLL, LNLGFGAVGPALAWNTAVSFM, and GLAVQNFVSAAVGIAVAIAVV. The tract at residues 162 to 188 is disordered; sequence AVGGPGGPNGPGGPGGPNGPGAGSRDD. The segment covering 164-183 has biased composition (gly residues); that stretch reads GGPGGPNGPGGPGGPNGPGA. 7 helical membrane passes run 208–228, 280–300, 314–334, 409–429, 449–469, 514–534, and 557–577; these read IRILLPVCVIAAIVLVAGGAI, PTSWTNLVEIFLLLAIAFSLP, LAIVAVMAVLALGSFAVNAAF, GLYGMLVLAVVTVFVAGLMIG, LYFLATPAIALLGTGVAMGLP, ALGLAMLFGRLLPMLLVLGMA, and FAGMLGAIALIIVALTFFPAL.

The protein belongs to the KdpA family. As to quaternary structure, the system is composed of three essential subunits: KdpA, KdpB and KdpC.

It localises to the cell membrane. Its function is as follows. Part of the high-affinity ATP-driven potassium transport (or Kdp) system, which catalyzes the hydrolysis of ATP coupled with the electrogenic transport of potassium into the cytoplasm. This subunit binds the extracellular potassium ions and delivers the ions to the membrane domain of KdpB through an intramembrane tunnel. This Frankia alni (strain DSM 45986 / CECT 9034 / ACN14a) protein is Potassium-transporting ATPase potassium-binding subunit.